Here is a 308-residue protein sequence, read N- to C-terminus: Porphobilinogen deaminase (308 aa).

C240 is subject to S-(dipyrrolylmethanemethyl)cysteine.

This sequence belongs to the HMBS family. In terms of assembly, monomer. The cofactor is dipyrromethane.

It catalyses the reaction 4 porphobilinogen + H2O = hydroxymethylbilane + 4 NH4(+). Its pathway is porphyrin-containing compound metabolism; protoporphyrin-IX biosynthesis; coproporphyrinogen-III from 5-aminolevulinate: step 2/4. Tetrapolymerization of the monopyrrole PBG into the hydroxymethylbilane pre-uroporphyrinogen in several discrete steps. The polypeptide is Porphobilinogen deaminase (Campylobacter lari (strain RM2100 / D67 / ATCC BAA-1060)).